Reading from the N-terminus, the 116-residue chain is uncharacterized protein (116 aa).

This is an uncharacterized protein from Invertebrate iridescent virus 6 (IIV-6).